Reading from the N-terminus, the 443-residue chain is Chromosomal replication initiator protein DnaA (443 aa).

A domain I, interacts with DnaA modulators region spans residues 1–76; it reads MMDAWPRCLE…GNGEVALAVG (76 aa). Positions 76–105 are domain II; that stretch reads GSRPRAPEPAPAPVAATIAPQAAPIAPFAG. The segment at 106-323 is domain III, AAA+ region; sequence NLDSHYTFAN…GALNTLVARA (218 aa). ATP is bound by residues Gly151, Gly153, Lys154, and Thr155. The interval 324–443 is domain IV, binds dsDNA; the sequence is NFTGRSITVE…WEKLIRKLSE (120 aa).

It belongs to the DnaA family. As to quaternary structure, oligomerizes as a right-handed, spiral filament on DNA at oriC.

It is found in the cytoplasm. Its function is as follows. Plays an essential role in the initiation and regulation of chromosomal replication. ATP-DnaA binds to the origin of replication (oriC) to initiate formation of the DNA replication initiation complex once per cell cycle. Binds the DnaA box (a 9 base pair repeat at the origin) and separates the double-stranded (ds)DNA. Forms a right-handed helical filament on oriC DNA; dsDNA binds to the exterior of the filament while single-stranded (ss)DNA is stabiized in the filament's interior. The ATP-DnaA-oriC complex binds and stabilizes one strand of the AT-rich DNA unwinding element (DUE), permitting loading of DNA polymerase. After initiation quickly degrades to an ADP-DnaA complex that is not apt for DNA replication. Binds acidic phospholipids. In Xanthomonas oryzae pv. oryzae (strain KACC10331 / KXO85), this protein is Chromosomal replication initiator protein DnaA.